Here is a 610-residue protein sequence, read N- to C-terminus: UvrABC system protein C (610 aa).

Residues 13–91 (HLPGVYRMYD…IKENQPKYNV (79 aa)) form the GIY-YIG domain. A UVR domain is found at 201–236 (GQVVEHLVQKMENAAQELDFEAAARFRDQIQSVRAV).

It belongs to the UvrC family. Interacts with UvrB in an incision complex.

The protein localises to the cytoplasm. Functionally, the UvrABC repair system catalyzes the recognition and processing of DNA lesions. UvrC both incises the 5' and 3' sides of the lesion. The N-terminal half is responsible for the 3' incision and the C-terminal half is responsible for the 5' incision. The sequence is that of UvrABC system protein C from Actinobacillus pleuropneumoniae serotype 5b (strain L20).